A 194-amino-acid polypeptide reads, in one-letter code: Peptidyl-tRNA hydrolase (194 aa).

Y17 is a tRNA binding site. Residue H22 is the Proton acceptor of the active site. The tRNA site is built by F68, N70, and N116.

Belongs to the PTH family. As to quaternary structure, monomer.

It is found in the cytoplasm. The enzyme catalyses an N-acyl-L-alpha-aminoacyl-tRNA + H2O = an N-acyl-L-amino acid + a tRNA + H(+). Its function is as follows. Hydrolyzes ribosome-free peptidyl-tRNAs (with 1 or more amino acids incorporated), which drop off the ribosome during protein synthesis, or as a result of ribosome stalling. In terms of biological role, catalyzes the release of premature peptidyl moieties from peptidyl-tRNA molecules trapped in stalled 50S ribosomal subunits, and thus maintains levels of free tRNAs and 50S ribosomes. The sequence is that of Peptidyl-tRNA hydrolase from Haemophilus influenzae (strain 86-028NP).